Consider the following 212-residue polypeptide: Adenylate kinase (212 aa).

Residue 10–15 coordinates ATP; that stretch reads GAGKGT. An NMP region spans residues 30–59; that stretch reads STGDILREAMAQETELGQKAKSYIDAGELV. Residues threonine 31, arginine 36, 57 to 59, 84 to 87, and glutamine 91 contribute to the AMP site; these read ELV and GYPR. The tract at residues 125 to 158 is LID; sequence RRRVHEETGETYHLDHDPPPEDVDPDLIVQRSDD. ATP is bound by residues arginine 126 and 135–136; that span reads TY. The AMP site is built by arginine 155 and arginine 166. Glycine 194 is a binding site for ATP.

This sequence belongs to the adenylate kinase family. Monomer.

It localises to the cytoplasm. It catalyses the reaction AMP + ATP = 2 ADP. The protein operates within purine metabolism; AMP biosynthesis via salvage pathway; AMP from ADP: step 1/1. Catalyzes the reversible transfer of the terminal phosphate group between ATP and AMP. Plays an important role in cellular energy homeostasis and in adenine nucleotide metabolism. The protein is Adenylate kinase of Salinibacter ruber (strain DSM 13855 / M31).